We begin with the raw amino-acid sequence, 157 residues long: Oleosin-B1 (157 aa).

Positions 2-20 (GILRKKKHERNASFKSVLT) are polar. A hydrophobic region spans residues 21 to 138 (SILATQAATF…AAPAAAPAAA (118 aa)). 3 helical membrane-spanning segments follow: residues 22 to 42 (ILATQAATFLLLISGVSLAGT), 45 to 65 (AFIATMPLFVVFSPILVPAGI), and 72 to 92 (TGLAAAGGAGATAVTIILWLY). 9 repeat units span residues 119–122 (PRAA), 123–126 (PAAA), 127–130 (PAAA), 131–134 (PAAA), 135–138 (PAAA), 139–142 (PAPK), 143–146 (PAAA), 147–150 (PAPK), and 151–154 (PAAP). The 9 X 4 AA tandem repeats of P-[AR]-[AP]-[AKP] stretch occupies residues 119–122 (PRAA). The tract at residues 137-157 (AAPAPKPAAAPAPKPAAPPAL) is disordered. A compositionally biased stretch (pro residues) spans 138-157 (APAPKPAAAPAPKPAAPPAL).

Belongs to the oleosin family. The full-length protein is found in the tapetal lipid bodies of immature anthers, the proteolytically cleaved C-terminal product is found on the coats of pollen grains. Highest expression is in microspores entering and undergoing mitosis. No expression is observed in male-sterile plants, green tissues or roots.

Its subcellular location is the lipid droplet. The protein resides in the membrane. Functionally, many of the major pollen coat proteins are derived from endoproteolytic cleavage of oleosin-like proteins. This Brassica napus (Rape) protein is Oleosin-B1 (OlnB1).